Reading from the N-terminus, the 273-residue chain is Ribosomal RNA small subunit methyltransferase A (273 aa).

Positions 19, 21, 46, 67, 92, and 113 each coordinate S-adenosyl-L-methionine.

It belongs to the class I-like SAM-binding methyltransferase superfamily. rRNA adenine N(6)-methyltransferase family. RsmA subfamily.

Its subcellular location is the cytoplasm. The enzyme catalyses adenosine(1518)/adenosine(1519) in 16S rRNA + 4 S-adenosyl-L-methionine = N(6)-dimethyladenosine(1518)/N(6)-dimethyladenosine(1519) in 16S rRNA + 4 S-adenosyl-L-homocysteine + 4 H(+). Functionally, specifically dimethylates two adjacent adenosines (A1518 and A1519) in the loop of a conserved hairpin near the 3'-end of 16S rRNA in the 30S particle. May play a critical role in biogenesis of 30S subunits. The chain is Ribosomal RNA small subunit methyltransferase A from Hahella chejuensis (strain KCTC 2396).